The chain runs to 1153 residues: Otoancorin (1153 aa).

An N-terminal signal peptide occupies residues 1–22; that stretch reads MSQEPTTYSLFLFLFLSHGVSS. N-linked (GlcNAc...) asparagine glycosylation is present at asparagine 156. N-linked (GlcNAc...) (complex) asparagine glycosylation occurs at asparagine 211. N-linked (GlcNAc...) asparagine glycosylation is found at asparagine 244, asparagine 289, asparagine 321, asparagine 394, asparagine 398, asparagine 460, asparagine 544, asparagine 812, asparagine 911, and asparagine 974. Residues 1109 to 1128 form a disordered region; that stretch reads HSWQDAPASAGPTRTSSSRS. Alanine 1130 carries the GPI-anchor amidated alanine lipid modification. Positions 1131-1153 are cleaved as a propeptide — removed in mature form; it reads GALQSWGLWLGCPLLVLMAKLLW.

It belongs to the stereocilin family.

The protein localises to the apical cell membrane. The protein resides in the secreted. It is found in the extracellular space. Its subcellular location is the extracellular matrix. Functionally, may act as an adhesion molecule. The protein is Otoancorin (OTOA) of Homo sapiens (Human).